Reading from the N-terminus, the 439-residue chain is MSKKLHLISLGCTKNLVDSEVMLGRLKSYEITPLIEKADVIIVNTCGFIEAAKQESLSVLFEALERRKKGAILVASGCLSERYHEELLREIPEIDIITGVGDYDKIDQMVRERQGFHSGEVFLASEEQERVITGSSVHAYVKLSEGCNQTCSFCAIPQFKGKLHSRTLESTLKEVKNLIAKGFTDFSFIAQDTSSYLRDRGEKEGLIQLIGALDSLEGIKSARILYLYPSTASAKLIQAIQKSQVVQNYFDMPLQHIAESMLKRMKRGANQKKHKELLERMRQVPHSFVRTTLILGHPGESEEEFEELCRFLEEFRFDRVNLFAYSDEEGTSAHKMEGKLDKRVINARLKRLDKIIQKQHRALLKEMVGQEIPVILEGGSSEHEFFYSARDARWAPEIDGEILINETLLPQPAPGHYWAKITQVAGKQLLATLTRRWEK.

Residues 3-115 (KKLHLISLGC…IDQMVRERQG (113 aa)) form the MTTase N-terminal domain. The [4Fe-4S] cluster site is built by C12, C46, C78, C147, C151, and C154. A Radical SAM core domain is found at 133–362 (TGSSVHAYVK…DKIIQKQHRA (230 aa)).

The protein belongs to the methylthiotransferase family. RimO subfamily. It depends on [4Fe-4S] cluster as a cofactor.

It is found in the cytoplasm. It carries out the reaction L-aspartate(89)-[ribosomal protein uS12]-hydrogen + (sulfur carrier)-SH + AH2 + 2 S-adenosyl-L-methionine = 3-methylsulfanyl-L-aspartate(89)-[ribosomal protein uS12]-hydrogen + (sulfur carrier)-H + 5'-deoxyadenosine + L-methionine + A + S-adenosyl-L-homocysteine + 2 H(+). Its function is as follows. Catalyzes the methylthiolation of an aspartic acid residue of ribosomal protein uS12. This is Ribosomal protein uS12 methylthiotransferase RimO from Wolinella succinogenes (strain ATCC 29543 / DSM 1740 / CCUG 13145 / JCM 31913 / LMG 7466 / NCTC 11488 / FDC 602W) (Vibrio succinogenes).